A 385-amino-acid chain; its full sequence is Histidinol-phosphate aminotransferase (385 aa).

K235 carries the post-translational modification N6-(pyridoxal phosphate)lysine.

This sequence belongs to the class-II pyridoxal-phosphate-dependent aminotransferase family. Histidinol-phosphate aminotransferase subfamily. As to quaternary structure, homodimer. Pyridoxal 5'-phosphate is required as a cofactor.

It carries out the reaction L-histidinol phosphate + 2-oxoglutarate = 3-(imidazol-4-yl)-2-oxopropyl phosphate + L-glutamate. The protein operates within amino-acid biosynthesis; L-histidine biosynthesis; L-histidine from 5-phospho-alpha-D-ribose 1-diphosphate: step 7/9. The chain is Histidinol-phosphate aminotransferase from Nocardia farcinica (strain IFM 10152).